A 342-amino-acid chain; its full sequence is Foldase protein PrsA (342 aa).

The first 22 residues, 1–22, serve as a signal peptide directing secretion; sequence MVSVKKIVASALVGVLMFSAVG. Residue Cys23 is the site of N-palmitoyl cysteine attachment. A lipid anchor (S-diacylglycerol cysteine) is attached at Cys23. Residues 189 to 284 form the PpiC domain; the sequence is DSGVLTKHLL…FGYHIIQAGA (96 aa).

It belongs to the PrsA family.

It localises to the cell membrane. It carries out the reaction [protein]-peptidylproline (omega=180) = [protein]-peptidylproline (omega=0). In terms of biological role, plays a major role in protein secretion by helping the post-translocational extracellular folding of several secreted proteins. The sequence is that of Foldase protein PrsA from Clostridium perfringens (strain 13 / Type A).